The chain runs to 470 residues: UDP-N-acetylmuramate--L-alanine ligase (470 aa).

An ATP-binding site is contributed by Gly118–Thr124.

It belongs to the MurCDEF family.

Its subcellular location is the cytoplasm. The catalysed reaction is UDP-N-acetyl-alpha-D-muramate + L-alanine + ATP = UDP-N-acetyl-alpha-D-muramoyl-L-alanine + ADP + phosphate + H(+). Its pathway is cell wall biogenesis; peptidoglycan biosynthesis. Functionally, cell wall formation. In Cereibacter sphaeroides (strain ATCC 17029 / ATH 2.4.9) (Rhodobacter sphaeroides), this protein is UDP-N-acetylmuramate--L-alanine ligase.